The primary structure comprises 89 residues: Small ribosomal subunit protein uS15 (89 aa).

Belongs to the universal ribosomal protein uS15 family. Part of the 30S ribosomal subunit. Forms a bridge to the 50S subunit in the 70S ribosome, contacting the 23S rRNA.

In terms of biological role, one of the primary rRNA binding proteins, it binds directly to 16S rRNA where it helps nucleate assembly of the platform of the 30S subunit by binding and bridging several RNA helices of the 16S rRNA. Forms an intersubunit bridge (bridge B4) with the 23S rRNA of the 50S subunit in the ribosome. This chain is Small ribosomal subunit protein uS15, found in Nocardia farcinica (strain IFM 10152).